Reading from the N-terminus, the 103-residue chain is NAD(P)H-quinone oxidoreductase subunit 4L (103 aa).

Helical transmembrane passes span 5-25, 32-52, and 66-86; these read LQYC…GLIT, VLMS…GFSN, and IFVI…VLAI.

The protein belongs to the complex I subunit 4L family. As to quaternary structure, NDH-1 can be composed of about 15 different subunits; different subcomplexes with different compositions have been identified which probably have different functions.

Its subcellular location is the cellular thylakoid membrane. The enzyme catalyses a plastoquinone + NADH + (n+1) H(+)(in) = a plastoquinol + NAD(+) + n H(+)(out). The catalysed reaction is a plastoquinone + NADPH + (n+1) H(+)(in) = a plastoquinol + NADP(+) + n H(+)(out). Functionally, NDH-1 shuttles electrons from an unknown electron donor, via FMN and iron-sulfur (Fe-S) centers, to quinones in the respiratory and/or the photosynthetic chain. The immediate electron acceptor for the enzyme in this species is believed to be plastoquinone. Couples the redox reaction to proton translocation, and thus conserves the redox energy in a proton gradient. Cyanobacterial NDH-1 also plays a role in inorganic carbon-concentration. This is NAD(P)H-quinone oxidoreductase subunit 4L from Synechocystis sp. (strain ATCC 27184 / PCC 6803 / Kazusa).